A 308-amino-acid polypeptide reads, in one-letter code: Probable D,D-dipeptide transport ATP-binding protein DdpF (308 aa).

The region spanning 8–243 is the ABC transporter domain; the sequence is LRDVHINFPA…PAHPYTRLLL (236 aa). 49-56 contacts ATP; that stretch reads GESGCGKS.

It belongs to the ABC transporter superfamily. The complex is composed of two ATP-binding proteins (DdpD and DdpF), two transmembrane proteins (DdpB and DdpC) and a solute-binding protein (DdpA).

It localises to the cell inner membrane. Part of the ABC transporter complex DdpABCDF, which is probably involved in D,D-dipeptide transport. Probably responsible for energy coupling to the transport system. This is Probable D,D-dipeptide transport ATP-binding protein DdpF from Escherichia coli (strain K12).